The chain runs to 132 residues: MPGTKQVNVGSLKVGQYVMIDGVPCEIVDISVSKPGKHGGAKARVVGIGIFEKVKKEFVAPTSSKVEVPIIDRRKGQVLAIMGDMVQIMDLQTYETLELPIPEGIEGLEPGGEVEYIEAVGQYKITRVIGGK.

Hypusine is present on Lys-37.

The protein belongs to the eIF-5A family.

The protein localises to the cytoplasm. Its function is as follows. Functions by promoting the formation of the first peptide bond. In Methanocaldococcus jannaschii (strain ATCC 43067 / DSM 2661 / JAL-1 / JCM 10045 / NBRC 100440) (Methanococcus jannaschii), this protein is Translation initiation factor 5A (eif5a).